Consider the following 569-residue polypeptide: Beta-galactoside-specific lectin 3 (569 aa).

The first 33 residues, 1–33 (MNAVMDSRGAWVSCFLILGLVFGATVKAETKFS), serve as a signal peptide directing secretion. Glutamate 198 is a catalytic residue. 3 disulfide bridges follow: cysteine 280–cysteine 311, cysteine 327–cysteine 346, and cysteine 370–cysteine 387. Residues 288–307 (EVRYWPLVIRPVLENSGAVD) constitute a propeptide, connecting peptide. The Ricin B-type lectin 1 domain occupies 314-441 (SEPTVRIVGR…YSLGQGWLAG (128 aa)). D-galactose is bound at residue 329-331 (DVR). N-linked (GlcNAc...) asparagine glycosylation is found at asparagine 402 and asparagine 442. The region spanning 445–568 (APREVTIYGF…GNPNQMWLPV (124 aa)) is the Ricin B-type lectin 2 domain. 2 disulfide bridges follow: cysteine 458-cysteine 471 and cysteine 497-cysteine 514. Residue 541 to 543 (DVA) participates in D-galactose binding.

Belongs to the ribosome-inactivating protein family. Type 2 RIP subfamily. As to quaternary structure, disulfide-linked dimer of A and B chains.

The enzyme catalyses Endohydrolysis of the N-glycosidic bond at one specific adenosine on the 28S rRNA.. Its function is as follows. The A chain is responsible for inhibiting protein synthesis through the catalytic inactivation of 60S ribosomal subunits by removing adenine from position 4,324 of 28S rRNA. The B chain binds to cell receptors and probably facilitates the entry into the cell of the A chain; B chains are also responsible for cell agglutination (lectin activity). Inhibits growth of the human tumor cell line Molt4. In Viscum album (European mistletoe), this protein is Beta-galactoside-specific lectin 3.